A 379-amino-acid chain; its full sequence is Cysteine-rich receptor-like protein kinase 44 (379 aa).

Residues 56–336 (FSPYNHLGEG…VRMLNANSFT (281 aa)) enclose the Protein kinase domain. ATP is bound by residues 62–70 (LGEGGFGAV) and Lys-84. Position 129 is a phosphotyrosine (Tyr-129). Asp-181 serves as the catalytic Proton acceptor. Residue Ser-185 is modified to Phosphoserine. At Thr-223 the chain carries Phosphothreonine. Tyr-231 bears the Phosphotyrosine mark.

It belongs to the protein kinase superfamily. Ser/Thr protein kinase family. CRK subfamily.

It carries out the reaction L-seryl-[protein] + ATP = O-phospho-L-seryl-[protein] + ADP + H(+). The catalysed reaction is L-threonyl-[protein] + ATP = O-phospho-L-threonyl-[protein] + ADP + H(+). This is Cysteine-rich receptor-like protein kinase 44 from Arabidopsis thaliana (Mouse-ear cress).